The chain runs to 195 residues: Glycerol-3-phosphate acyltransferase 2 (195 aa).

6 helical membrane-spanning segments follow: residues 4–24 (VVSL…VAGV), 52–72 (GAAA…VGLA), 73–93 (LWLA…GVVF), 115–135 (AMLV…LALI), 150–170 (AIPF…SRLG), and 171–191 (GGAE…HLLA).

It belongs to the PlsY family. As to quaternary structure, probably interacts with PlsX.

The protein localises to the cell membrane. The enzyme catalyses an acyl phosphate + sn-glycerol 3-phosphate = a 1-acyl-sn-glycero-3-phosphate + phosphate. Its pathway is lipid metabolism; phospholipid metabolism. In terms of biological role, catalyzes the transfer of an acyl group from acyl-phosphate (acyl-PO(4)) to glycerol-3-phosphate (G3P) to form lysophosphatidic acid (LPA). This enzyme utilizes acyl-phosphate as fatty acyl donor, but not acyl-CoA or acyl-ACP. In Deinococcus radiodurans (strain ATCC 13939 / DSM 20539 / JCM 16871 / CCUG 27074 / LMG 4051 / NBRC 15346 / NCIMB 9279 / VKM B-1422 / R1), this protein is Glycerol-3-phosphate acyltransferase 2.